We begin with the raw amino-acid sequence, 542 residues long: NAD-dependent deacetylase sir2D (542 aa).

Disordered regions lie at residues 1-37 (MNKR…NTPL) and 136-160 (ETST…TTTT). The span at 8–25 (NNELNEIQNNQNKNNNNK) shows a compositional bias: low complexity. A coiled-coil region spans residues 165–193 (NETILLDILNNNKDEVDDEIQRIGNNVGN). The region spanning 283 to 542 (ATLDLSTFEK…VQDLLNKVKW (260 aa)) is the Deacetylase sirtuin-type domain. The active-site Proton acceptor is histidine 411. 4 residues coordinate Zn(2+): cysteine 419, cysteine 422, cysteine 443, and cysteine 446.

It belongs to the sirtuin family. Zn(2+) is required as a cofactor.

The enzyme catalyses N(6)-acetyl-L-lysyl-[protein] + NAD(+) + H2O = 2''-O-acetyl-ADP-D-ribose + nicotinamide + L-lysyl-[protein]. Functionally, NAD-dependent deacetylase, which plays an important role in the regulation of transcriptional repression. This Dictyostelium discoideum (Social amoeba) protein is NAD-dependent deacetylase sir2D (sir2D).